The primary structure comprises 395 residues: Neuromedin-U receptor 2 (395 aa).

Over 1–41 the chain is Extracellular; that stretch reads MGKLENASWIHDSLMKYLNSTEEYLAYLCGPKRSDLSLPVS. N-linked (GlcNAc...) asparagine glycans are attached at residues Asn6 and Asn19. The chain crosses the membrane as a helical span at residues 42 to 62; it reads VVYALIFVVGVIGNLLVCLVI. The Cytoplasmic segment spans residues 63–74; the sequence is ARHQTLKTPTNY. A helical membrane pass occupies residues 75–95; it reads YLFSLAVSDLLVLLLGMPLEV. Residues 96 to 115 are Extracellular-facing; the sequence is YELWHNYPFLFGPVGCYFKT. The cysteines at positions 111 and 196 are disulfide-linked. A helical membrane pass occupies residues 116 to 138; sequence ALFETVCFASILSVTTVSIERYV. The Cytoplasmic portion of the chain corresponds to 139 to 157; that stretch reads AIVHPFRAKLESTRRRALR. Residues 158–178 form a helical membrane-spanning segment; that stretch reads ILSLVWSFSVVFSLPNTSIHG. The Extracellular portion of the chain corresponds to 179–212; sequence IKFQQFPNGSSVPGSATCTVTKPIWVYNFIIQAT. N-linked (GlcNAc...) asparagine glycosylation occurs at Asn186. Residues 213–233 form a helical membrane-spanning segment; it reads SFLFYILPMTLISVLYYLMGL. The Cytoplasmic portion of the chain corresponds to 234–257; the sequence is RLKRDESLEADKVTVNIHRPSRKS. Residues 258–278 traverse the membrane as a helical segment; it reads VTKMLFVLVLVFAICWTPFHV. Residues 279–293 are Extracellular-facing; it reads DRLFFSFVDEWTESL. A helical membrane pass occupies residues 294-314; it reads AAVFNLIHVVSGVFFYLSSAV. The Cytoplasmic portion of the chain corresponds to 315–395; it reads NPIIYNLLSR…TTVPCVEEVP (81 aa).

It belongs to the G-protein coupled receptor 1 family. As to expression, expressed primarily in brain tissues, more specifically in medulla and spinal cord. Widespread distribution in peripheral tissues.

Its subcellular location is the cell membrane. Functionally, receptor for the neuromedin-U and neuromedin-S neuropeptides. In Mus musculus (Mouse), this protein is Neuromedin-U receptor 2 (Nmur2).